Reading from the N-terminus, the 173-residue chain is NADH-ubiquinone oxidoreductase chain 6 (173 aa).

5 helical membrane passes run 1–21 (MAYI…SVAS), 25–45 (PYFA…VLMG), 53–73 (LVLF…CAAL), 87–107 (VLGS…WFWG), and 139–159 (LGGG…LVVL).

This sequence belongs to the complex I subunit 6 family.

It is found in the mitochondrion membrane. It catalyses the reaction a ubiquinone + NADH + 5 H(+)(in) = a ubiquinol + NAD(+) + 4 H(+)(out). In terms of biological role, core subunit of the mitochondrial membrane respiratory chain NADH dehydrogenase (Complex I) that is believed to belong to the minimal assembly required for catalysis. Complex I functions in the transfer of electrons from NADH to the respiratory chain. The immediate electron acceptor for the enzyme is believed to be ubiquinone. The sequence is that of NADH-ubiquinone oxidoreductase chain 6 (MT-ND6) from Gadus morhua (Atlantic cod).